Consider the following 412-residue polypeptide: Citrate synthase (412 aa).

Active-site residues include His305 and Asp364.

This sequence belongs to the citrate synthase family.

It carries out the reaction oxaloacetate + acetyl-CoA + H2O = citrate + CoA + H(+). Its pathway is carbohydrate metabolism; tricarboxylic acid cycle; isocitrate from oxaloacetate: step 1/2. The chain is Citrate synthase (gltA) from Rickettsia bellii.